A 437-amino-acid chain; its full sequence is Xylose isomerase (437 aa).

Active-site residues include His-102 and Asp-105. Glu-233, Glu-269, His-272, Asp-297, Asp-308, Asp-310, and Asp-340 together coordinate Mg(2+).

It belongs to the xylose isomerase family. As to quaternary structure, homotetramer. Mg(2+) is required as a cofactor.

It localises to the cytoplasm. It catalyses the reaction alpha-D-xylose = alpha-D-xylulofuranose. The polypeptide is Xylose isomerase (Novosphingobium aromaticivorans (strain ATCC 700278 / DSM 12444 / CCUG 56034 / CIP 105152 / NBRC 16084 / F199)).